Consider the following 553-residue polypeptide: Dihydroxy-acid dehydratase (553 aa).

Mg(2+) is bound at residue D78. C119 serves as a coordination point for [2Fe-2S] cluster. Mg(2+) is bound by residues D120 and K121. K121 bears the N6-carboxylysine mark. C193 contacts [2Fe-2S] cluster. E441 is a binding site for Mg(2+). S467 functions as the Proton acceptor in the catalytic mechanism.

Belongs to the IlvD/Edd family. Homodimer. [2Fe-2S] cluster serves as cofactor. Requires Mg(2+) as cofactor.

The catalysed reaction is (2R)-2,3-dihydroxy-3-methylbutanoate = 3-methyl-2-oxobutanoate + H2O. It catalyses the reaction (2R,3R)-2,3-dihydroxy-3-methylpentanoate = (S)-3-methyl-2-oxopentanoate + H2O. Its pathway is amino-acid biosynthesis; L-isoleucine biosynthesis; L-isoleucine from 2-oxobutanoate: step 3/4. It participates in amino-acid biosynthesis; L-valine biosynthesis; L-valine from pyruvate: step 3/4. Functions in the biosynthesis of branched-chain amino acids. Catalyzes the dehydration of (2R,3R)-2,3-dihydroxy-3-methylpentanoate (2,3-dihydroxy-3-methylvalerate) into 2-oxo-3-methylpentanoate (2-oxo-3-methylvalerate) and of (2R)-2,3-dihydroxy-3-methylbutanoate (2,3-dihydroxyisovalerate) into 2-oxo-3-methylbutanoate (2-oxoisovalerate), the penultimate precursor to L-isoleucine and L-valine, respectively. In Trichlorobacter lovleyi (strain ATCC BAA-1151 / DSM 17278 / SZ) (Geobacter lovleyi), this protein is Dihydroxy-acid dehydratase.